A 357-amino-acid chain; its full sequence is Phosphoribosylformylglycinamidine cyclo-ligase (357 aa).

The protein belongs to the AIR synthase family.

It localises to the cytoplasm. It carries out the reaction 2-formamido-N(1)-(5-O-phospho-beta-D-ribosyl)acetamidine + ATP = 5-amino-1-(5-phospho-beta-D-ribosyl)imidazole + ADP + phosphate + H(+). Its pathway is purine metabolism; IMP biosynthesis via de novo pathway; 5-amino-1-(5-phospho-D-ribosyl)imidazole from N(2)-formyl-N(1)-(5-phospho-D-ribosyl)glycinamide: step 2/2. This chain is Phosphoribosylformylglycinamidine cyclo-ligase, found in Rhodopseudomonas palustris (strain BisB18).